Here is a 242-residue protein sequence, read N- to C-terminus: ATP synthase subunit a (242 aa).

The next 6 helical transmembrane spans lie at 29 to 49 (SSIY…LAFY), 84 to 104 (FIPL…LGMT), 114 to 134 (IIVT…VGFV), 140 to 160 (FLTL…MIVI), 181 to 201 (MAGH…MIYL), and 203 to 223 (FLPI…AILQ).

The protein belongs to the ATPase A chain family. F-type ATPases have 2 components, CF(1) - the catalytic core - and CF(0) - the membrane proton channel. CF(1) has five subunits: alpha(3), beta(3), gamma(1), delta(1), epsilon(1). CF(0) has three main subunits: a(1), b(2) and c(9-12). The alpha and beta chains form an alternating ring which encloses part of the gamma chain. CF(1) is attached to CF(0) by a central stalk formed by the gamma and epsilon chains, while a peripheral stalk is formed by the delta and b chains.

The protein localises to the cell inner membrane. Key component of the proton channel; it plays a direct role in the translocation of protons across the membrane. This chain is ATP synthase subunit a, found in Rickettsia conorii (strain ATCC VR-613 / Malish 7).